The chain runs to 413 residues: Transmembrane protein 184A (413 aa).

7 helical membrane-spanning segments follow: residues 47–69 (WLFL…ALVL), 93–113 (LLLI…LLGD), 130–150 (FVIY…GAIM), 187–207 (LQFC…QAFG), 223–243 (VTLI…LFYF), 258–278 (FLTI…LAIL), and 300–320 (LAAG…SVAL). Residues 372–413 (QHYTQQATHEAPRPGTHPSGGSGGSRKSRSLEKRMLIPSEDL) form a disordered region.

It belongs to the TMEM184 family. In terms of tissue distribution, expressed in vascular cells (at protein level).

The protein resides in the cell membrane. It localises to the cytoplasm. The protein localises to the perinuclear region. It is found in the cytoplasmic vesicle membrane. Its subcellular location is the early endosome membrane. The protein resides in the endosome. It localises to the cytoplasmic vesicle. The protein localises to the secretory vesicle membrane. Its function is as follows. Acts as a heparin receptor in vascular cells. May be involved in vesicle transport in exocrine cells and Sertoli cells. In Homo sapiens (Human), this protein is Transmembrane protein 184A (TMEM184A).